Consider the following 292-residue polypeptide: Pyridoxal 5'-phosphate synthase subunit PdxS (292 aa).

D-ribose 5-phosphate is bound at residue Asp-22. The active-site Schiff-base intermediate with D-ribose 5-phosphate is the Lys-79. Gly-151 contacts D-ribose 5-phosphate. A D-glyceraldehyde 3-phosphate-binding site is contributed by Arg-163. D-ribose 5-phosphate is bound by residues Gly-212 and 233-234 (GS).

It belongs to the PdxS/SNZ family. In terms of assembly, in the presence of PdxT, forms a dodecamer of heterodimers.

It carries out the reaction aldehydo-D-ribose 5-phosphate + D-glyceraldehyde 3-phosphate + L-glutamine = pyridoxal 5'-phosphate + L-glutamate + phosphate + 3 H2O + H(+). It functions in the pathway cofactor biosynthesis; pyridoxal 5'-phosphate biosynthesis. Functionally, catalyzes the formation of pyridoxal 5'-phosphate from ribose 5-phosphate (RBP), glyceraldehyde 3-phosphate (G3P) and ammonia. The ammonia is provided by the PdxT subunit. Can also use ribulose 5-phosphate and dihydroxyacetone phosphate as substrates, resulting from enzyme-catalyzed isomerization of RBP and G3P, respectively. The sequence is that of Pyridoxal 5'-phosphate synthase subunit PdxS from Ruminiclostridium cellulolyticum (strain ATCC 35319 / DSM 5812 / JCM 6584 / H10) (Clostridium cellulolyticum).